We begin with the raw amino-acid sequence, 736 residues long: Oxysterol-binding protein-related protein 9 (736 aa).

The residue at position 2 (alanine 2) is an N-acetylalanine. The PH domain maps to 2–99 (ASIVEGPLSK…WIHALEETIL (98 aa)). The disordered stretch occupies residues 209–368 (LEPVISTMPS…RDDDGEAGSV (160 aa)). A compositionally biased stretch (low complexity) spans 253–274 (TPTPNSTGSGNSPPSSSLTPPS). Residues serine 306, serine 324, serine 325, serine 326, and serine 329 each carry the phosphoserine modification. Polar residues-rich tracts occupy residues 314 to 329 (SSGS…SGNS) and 336 to 348 (TESL…NGTS). Residue serine 611 is modified to Phosphoserine.

The protein belongs to the OSBP family. Heterodimer with OSBPL11. Interacts with OSBPL10.

The protein resides in the late endosome membrane. The protein localises to the golgi apparatus. It is found in the trans-Golgi network membrane. The enzyme catalyses a 1,2-diacyl-sn-glycero-3-phospho-(1D-myo-inositol 4-phosphate)(out) + a 1,2-diacyl-sn-glycero-3-phospho-L-serine(in) = a 1,2-diacyl-sn-glycero-3-phospho-(1D-myo-inositol 4-phosphate)(in) + a 1,2-diacyl-sn-glycero-3-phospho-L-serine(out). In terms of biological role, interacts with OSBPL11 to function as lipid transfer proteins. Together they form a heterodimer that localizes at the ER-trans-Golgi membrane contact sites, and exchanges phosphatidylserine (1,2-diacyl-sn-glycero-3-phospho-L-serine, PS) for phosphatidylinositol-4-phosphate (1,2-diacyl-sn-glycero-3-phospho-(1D-myo-inositol 4-phosphate), PI(4)P) between the two organelles, a step that is critical for sphingomyelin synthesis in the Golgi complex. This chain is Oxysterol-binding protein-related protein 9 (Osbpl9), found in Mus musculus (Mouse).